A 686-amino-acid polypeptide reads, in one-letter code: Protein MxiA (686 aa).

Helical transmembrane passes span 28-52, 105-129, 197-216, 232-256, 274-292, and 299-315; these read LIIP…ILVF, FVIG…FIVI, AIAG…SVGM, ILTI…GFIV, IFGN…LAIG, and FFVF…LFYY.

This sequence belongs to the FHIPEP (flagella/HR/invasion proteins export pore) family.

The protein resides in the cell inner membrane. Necessary for the secretion of IPA invasins. The polypeptide is Protein MxiA (mxiA) (Shigella flexneri).